A 186-amino-acid polypeptide reads, in one-letter code: Large ribosomal subunit protein uL5 (186 aa).

It belongs to the universal ribosomal protein uL5 family. Part of the 50S ribosomal subunit; part of the 5S rRNA/L5/L18/L25 subcomplex. Contacts the 5S rRNA and the P site tRNA. Forms a bridge to the 30S subunit in the 70S ribosome.

In terms of biological role, this is one of the proteins that bind and probably mediate the attachment of the 5S RNA into the large ribosomal subunit, where it forms part of the central protuberance. In the 70S ribosome it contacts protein S13 of the 30S subunit (bridge B1b), connecting the 2 subunits; this bridge is implicated in subunit movement. Contacts the P site tRNA; the 5S rRNA and some of its associated proteins might help stabilize positioning of ribosome-bound tRNAs. This Legionella pneumophila subsp. pneumophila (strain Philadelphia 1 / ATCC 33152 / DSM 7513) protein is Large ribosomal subunit protein uL5.